The chain runs to 445 residues: Argininosuccinate synthase (445 aa).

Residues 17-25 (AFSGGLDTS) and alanine 43 each bind ATP. Tyrosine 99 contacts L-citrulline. ATP is bound by residues glycine 129 and threonine 131. L-aspartate contacts are provided by threonine 131, asparagine 135, and aspartate 136. L-citrulline is bound at residue asparagine 135. Aspartate 136 is a binding site for ATP. Positions 139 and 192 each coordinate L-citrulline. Aspartate 194 serves as a coordination point for ATP. Threonine 201, glutamate 203, and glutamate 280 together coordinate L-citrulline.

It belongs to the argininosuccinate synthase family. Type 2 subfamily. Homotetramer.

Its subcellular location is the cytoplasm. The enzyme catalyses L-citrulline + L-aspartate + ATP = 2-(N(omega)-L-arginino)succinate + AMP + diphosphate + H(+). Its pathway is amino-acid biosynthesis; L-arginine biosynthesis; L-arginine from L-ornithine and carbamoyl phosphate: step 2/3. The sequence is that of Argininosuccinate synthase from Rhodopseudomonas palustris (strain BisB18).